A 341-amino-acid chain; its full sequence is Anthranilate phosphoribosyltransferase (341 aa).

5-phospho-alpha-D-ribose 1-diphosphate is bound by residues Gly-84, 87 to 88 (GD), Thr-92, 94 to 97 (NVTT), 112 to 120 (KCGNRSVSS), and Ser-124. Gly-84 provides a ligand contact to anthranilate. Residue Thr-96 coordinates Mg(2+). Residue Asn-115 coordinates anthranilate. Arg-170 is an anthranilate binding site. Mg(2+) contacts are provided by Asp-228 and Glu-229.

It belongs to the anthranilate phosphoribosyltransferase family. In terms of assembly, homodimer. The cofactor is Mg(2+).

It carries out the reaction N-(5-phospho-beta-D-ribosyl)anthranilate + diphosphate = 5-phospho-alpha-D-ribose 1-diphosphate + anthranilate. Its pathway is amino-acid biosynthesis; L-tryptophan biosynthesis; L-tryptophan from chorismate: step 2/5. Functionally, catalyzes the transfer of the phosphoribosyl group of 5-phosphorylribose-1-pyrophosphate (PRPP) to anthranilate to yield N-(5'-phosphoribosyl)-anthranilate (PRA). The protein is Anthranilate phosphoribosyltransferase of Corynebacterium diphtheriae (strain ATCC 700971 / NCTC 13129 / Biotype gravis).